Reading from the N-terminus, the 233-residue chain is Biosynthetic peptidoglycan transglycosylase (233 aa).

Residues 8 to 28 (LIALPVGIFIFFNAYVYGNII) traverse the membrane as a helical segment.

The protein belongs to the glycosyltransferase 51 family.

Its subcellular location is the cell inner membrane. The catalysed reaction is [GlcNAc-(1-&gt;4)-Mur2Ac(oyl-L-Ala-gamma-D-Glu-L-Lys-D-Ala-D-Ala)](n)-di-trans,octa-cis-undecaprenyl diphosphate + beta-D-GlcNAc-(1-&gt;4)-Mur2Ac(oyl-L-Ala-gamma-D-Glu-L-Lys-D-Ala-D-Ala)-di-trans,octa-cis-undecaprenyl diphosphate = [GlcNAc-(1-&gt;4)-Mur2Ac(oyl-L-Ala-gamma-D-Glu-L-Lys-D-Ala-D-Ala)](n+1)-di-trans,octa-cis-undecaprenyl diphosphate + di-trans,octa-cis-undecaprenyl diphosphate + H(+). It participates in cell wall biogenesis; peptidoglycan biosynthesis. Peptidoglycan polymerase that catalyzes glycan chain elongation from lipid-linked precursors. This is Biosynthetic peptidoglycan transglycosylase from Neisseria gonorrhoeae (strain NCCP11945).